Reading from the N-terminus, the 688-residue chain is Elongation factor G (688 aa).

The tr-type G domain occupies 8 to 282 (DKFRNFGIMA…GVVDYLPSPL (275 aa)). Residues 17 to 24 (AHIDAGKT), 81 to 85 (DTPGH), and 135 to 138 (NKMD) contribute to the GTP site.

It belongs to the TRAFAC class translation factor GTPase superfamily. Classic translation factor GTPase family. EF-G/EF-2 subfamily.

It is found in the cytoplasm. In terms of biological role, catalyzes the GTP-dependent ribosomal translocation step during translation elongation. During this step, the ribosome changes from the pre-translocational (PRE) to the post-translocational (POST) state as the newly formed A-site-bound peptidyl-tRNA and P-site-bound deacylated tRNA move to the P and E sites, respectively. Catalyzes the coordinated movement of the two tRNA molecules, the mRNA and conformational changes in the ribosome. This chain is Elongation factor G, found in Clostridium botulinum (strain Alaska E43 / Type E3).